We begin with the raw amino-acid sequence, 395 residues long: THAP domain-containing protein 5 (395 aa).

The segment at 1–84 (MPRYCAAICC…LKQTAVPTIF (84 aa)) adopts a THAP-type zinc-finger fold. The tract at residues 85 to 112 (SLPEDNQGKDPSKKKSQKKNLEDEKEVC) is disordered. Positions 90–112 (NQGKDPSKKKSQKKNLEDEKEVC) are enriched in basic and acidic residues. Residues 321-324 (EHSY) carry the HCFC1-binding motif (HBM) motif. Residues 348–382 (LELKEQQTLGRLKSLEALIRQLKQENWLSEENVKI) adopt a coiled-coil conformation.

Interacts with HTRA2; under apoptotic conditions. Interacts with ABRAXAS2. In terms of processing, cleaved by HTRA2 during apoptosis. Detected in heart. Detected in brain and muscle (at protein level). Highly expressed in the heart. Also found in brain and skeletal muscle.

The protein localises to the nucleus. Its function is as follows. Has sequence-specific DNA-binding activity and can function as transcriptional repressor (in vitro). May be a regulator of cell cycle: THAP5 overexpression in human cell lines causes cell cycle arrest at G2/M phase. The chain is THAP domain-containing protein 5 (THAP5) from Homo sapiens (Human).